Consider the following 919-residue polypeptide: Calcium-activated chloride channel regulator 4 (919 aa).

Residues 1–21 (MGLFRGFVFLLVLCLLHQSNT) form the signal peptide. The interval 45–199 (DEKIIEQIED…GISGRNRVYK (155 aa)) is metalloprotease domain. An N-linked (GlcNAc...) asparagine glycan is attached at N75. Position 155 (H155) interacts with Zn(2+). E156 is a catalytic residue. H159 and D166 together coordinate Zn(2+). One can recognise a VWFA domain in the interval 306 to 476 (IVCLVLDKSG…NGLIDAFGAL (171 aa)). N340, N504, N542, N588, N628, N811, N832, N837, and N852 each carry an N-linked (GlcNAc...) asparagine glycan. Residues 870–893 (ANPDDIDPTPTPTPTPTPDKSHNS) form a disordered region. Residues 895–915 (VNISTLVLSVIGSVVIVNFIL) traverse the membrane as a helical segment.

The protein belongs to the CLCR family. Post-translationally, the translation product is autoproteolytically cleaved by the metalloprotease domain in the endoplasmic reticulum into a N-terminal and a C-terminal products that remain physically associated with each other. The cleavage is necessary for calcium-activated chloride channel (CaCC) activation activity. As to expression, primarily expressed in the digestive tract, mainly in colon. Detected in smaller amounts in brain, urogenital organs, testis, and salivary and mammary glands. Highly expressed in the epithelial layer and submucosal gland of the inferior turbinate mucosa. Lower levels in the epithelial layer of nasal polyp.

The protein resides in the cell membrane. The protein localises to the apical cell membrane. It localises to the secreted. Functionally, may be involved in mediating calcium-activated chloride conductance. In Homo sapiens (Human), this protein is Calcium-activated chloride channel regulator 4 (CLCA4).